An 855-amino-acid polypeptide reads, in one-letter code: Axonemal dynein light chain domain-containing protein 1 (855 aa).

Residues 1–17 (MSLPKTPSTPLNSASTS) show a composition bias toward polar residues. Residues 1–31 (MSLPKTPSTPLNSASTSESKKLVSVATEGTR) form a disordered region. Coiled coils occupy residues 316–402 (QRIL…WSSA), 451–480 (LQKL…RETL), and 571–596 (SERQ…RING).

The protein localises to the cytoplasm. Functionally, may be essential for spermiogenesis and male fertility probably by regulating the manchette dynamics, spermatid head shaping and sperm flagellum assembly. The protein is Axonemal dynein light chain domain-containing protein 1 (AXDND1) of Macaca fascicularis (Crab-eating macaque).